The chain runs to 214 residues: A-type ATP synthase subunit D (214 aa).

Belongs to the V-ATPase D subunit family. In terms of assembly, has multiple subunits with at least A(3), B(3), C, D, E, F, H, I and proteolipid K(x).

The protein resides in the cell membrane. Its function is as follows. Component of the A-type ATP synthase that produces ATP from ADP in the presence of a proton gradient across the membrane. This chain is A-type ATP synthase subunit D, found in Desulfurococcus sp. (strain SY).